A 513-amino-acid polypeptide reads, in one-letter code: Mesoderm induction early response protein 1 (513 aa).

Low complexity predominate over residues 1–16 (MAEPSVESSSPGGSAT). The tract at residues 1–174 (MAEPSVESSS…EEESEEDEDY (174 aa)) is disordered. Composition is skewed to basic and acidic residues over residues 17-36 (SDDHEFDPSADMLVHDFDDE) and 46-63 (EGERNFNSEIEDLNRESD). Positions 82-107 (QEDDDDEDEEEEEEEGEDDDDVDNDD) are enriched in acidic residues. Polar residues predominate over residues 131–146 (QSSNDDPAPSVASQDP). An interaction with HDAC1 region spans residues 157 to 261 (YFDTNSEIEE…IKDNEQALYE (105 aa)). A compositionally biased stretch (acidic residues) spans 162-174 (SEIEEESEEDEDY). Residues 182-280 (KEIMVGSMFQ…ESLRRLRFNV (99 aa)) enclose the ELM2 domain. The 53-residue stretch at 285–337 (EELSVWTEEECRNFEQGLKVYGKDFHVIQANKVRTRSVGECVAFYYMWKKSER) folds into the SANT domain. Residues 368–513 (ESESAASSRA…KLEELETLDD (146 aa)) form a disordered region. 2 stretches are compositionally biased toward basic and acidic residues: residues 416 to 425 (PSKDEAKPEG) and 463 to 476 (SRSENDFEEKNERP). Residues 483-500 (NSNGKESPGSSEFFQEAN) show a composition bias toward polar residues.

The protein localises to the nucleus. Its function is as follows. Transcriptional repressor regulating the expression of a number of genes. Probably functions through recruitment of histone deacetylases involved in chromatin silencing. The protein is Mesoderm induction early response protein 1 (MIER1) of Gallus gallus (Chicken).